Here is a 570-residue protein sequence, read N- to C-terminus: Pentatricopeptide repeat-containing protein At1g31430 (570 aa).

PPR repeat units follow at residues 10-44, 45-79, 80-110, 111-141, 147-177, 181-215, 216-242, 243-277, 278-312, 313-343, 344-378, 379-414, and 415-449; these read SLLM…GLYP, DNFT…GLEF, DSYV…MPQR, DVVS…MSQE, DEGT…VVTE, SVRI…NVKC, WTSM…SPVK, DVVL…GIRP, DNFV…RVTV, DKVV…IKER, DTAS…GVRL, DAIT…NVQP, and KSEH…SDET. The tract at residues 453-528 is type E motif; that stretch reads VYCSLLSAAR…FPGCSSIEID (76 aa). The type E(+) motif stretch occupies residues 529–561; it reads GVGHEFIVGDDLLSHPKMDEINSMLHQTTNLML.

It belongs to the PPR family. PCMP-E subfamily.

This is Pentatricopeptide repeat-containing protein At1g31430 (PCMP-E55) from Arabidopsis thaliana (Mouse-ear cress).